The chain runs to 46 residues: Escargot/snail protein homolog (46 aa).

C2H2-type zinc fingers lie at residues 1-4, 8-30, and 36-46; these read IRTH, CKCPICGKAFSRPWLLQGHTTHH, and FSCQHCNRAFA.

It belongs to the snail C2H2-type zinc-finger protein family.

Its subcellular location is the nucleus. This is Escargot/snail protein homolog from Oryzias latipes (Japanese rice fish).